The chain runs to 129 residues: Glycine cleavage system H protein (129 aa).

The 83-residue stretch at 24–106 (TYTVGITEHA…YTDGWIFKIK (83 aa)) folds into the Lipoyl-binding domain. An N6-lipoyllysine modification is found at lysine 65.

This sequence belongs to the GcvH family. As to quaternary structure, the glycine cleavage system is composed of four proteins: P, T, L and H. The cofactor is (R)-lipoate.

Its function is as follows. The glycine cleavage system catalyzes the degradation of glycine. The H protein shuttles the methylamine group of glycine from the P protein to the T protein. This is Glycine cleavage system H protein from Klebsiella pneumoniae subsp. pneumoniae (strain ATCC 700721 / MGH 78578).